A 257-amino-acid chain; its full sequence is 5-oxoprolinase subunit A (257 aa).

This sequence belongs to the LamB/PxpA family. Forms a complex composed of PxpA, PxpB and PxpC.

The catalysed reaction is 5-oxo-L-proline + ATP + 2 H2O = L-glutamate + ADP + phosphate + H(+). Catalyzes the cleavage of 5-oxoproline to form L-glutamate coupled to the hydrolysis of ATP to ADP and inorganic phosphate. This Pectobacterium atrosepticum (strain SCRI 1043 / ATCC BAA-672) (Erwinia carotovora subsp. atroseptica) protein is 5-oxoprolinase subunit A.